A 93-amino-acid chain; its full sequence is U12-lycotoxin-Ls1a (93 aa).

An N-terminal signal peptide occupies residues 1–18; it reads MKFAVILLFSLVVLAVAS. A propeptide spanning residues 19–38 is cleaved from the precursor; it reads ESVEEVRREIDIEDLPEQQR.

The protein belongs to the neurotoxin 31 family. Contains 5 disulfide bonds. Expressed by the venom gland.

The protein localises to the secreted. This Lycosa singoriensis (Wolf spider) protein is U12-lycotoxin-Ls1a.